Consider the following 638-residue polypeptide: Zinc finger and BTB domain-containing protein 22 (638 aa).

One can recognise a BTB domain in the interval cysteine 57–alanine 121. Disordered regions lie at residues cysteine 171–glutamine 223, serine 229–valine 248, aspartate 335–glutamate 354, and glutamate 367–valine 451. A compositionally biased stretch (polar residues) spans serine 189 to phenylalanine 210. Serine 203 is subject to Phosphoserine. The segment at phenylalanine 483 to histidine 504 adopts a C2H2-type 1; atypical zinc-finger fold. 2 C2H2-type zinc fingers span residues phenylalanine 510–histidine 532 and tyrosine 538–histidine 559. Positions histidine 564 to histidine 638 are disordered.

This sequence belongs to the krueppel C2H2-type zinc-finger protein family.

Its subcellular location is the nucleus. Its function is as follows. May be involved in transcriptional regulation. The polypeptide is Zinc finger and BTB domain-containing protein 22 (Zbtb22) (Mus musculus (Mouse)).